The primary structure comprises 546 residues: Protein FAM124A (546 aa).

Disordered stretches follow at residues 1–37 (MDPKAGGGGEEDDCVDSGAETGGSDYSHLSSTSSELS), 286–360 (FPKP…FQRS), and 488–546 (SSSS…EFYI). The span at 24-36 (SDYSHLSSTSSEL) shows a compositional bias: low complexity. Residues 286 to 302 (FPKPGRVHHASEKKRHS) are compositionally biased toward basic residues. Polar residues-rich tracts occupy residues 304-324 (PLPSTAVPSHTPGSSQQSPLN) and 347-360 (ANSTPNPPWSFQRS). A compositionally biased stretch (low complexity) spans 488–511 (SSSSATARAAPPAPSTSTLTDSSP).

This sequence belongs to the FAM124 family.

The sequence is that of Protein FAM124A (FAM124A) from Homo sapiens (Human).